We begin with the raw amino-acid sequence, 307 residues long: tRNA pseudouridine synthase B (307 aa).

Asp38 acts as the Nucleophile in catalysis.

The protein belongs to the pseudouridine synthase TruB family. Type 1 subfamily.

It catalyses the reaction uridine(55) in tRNA = pseudouridine(55) in tRNA. Functionally, responsible for synthesis of pseudouridine from uracil-55 in the psi GC loop of transfer RNAs. In Bacillus cereus (strain ATCC 14579 / DSM 31 / CCUG 7414 / JCM 2152 / NBRC 15305 / NCIMB 9373 / NCTC 2599 / NRRL B-3711), this protein is tRNA pseudouridine synthase B.